Reading from the N-terminus, the 421-residue chain is Histone-lysine N-methyltransferase SUV39H1 (421 aa).

Residues F46 to A104 form the Chromo domain. Residues A189–G249 enclose the Pre-SET domain. Residues C191, C193, C196, C203, C204, C231, C235, C237, and C241 each contribute to the Zn(2+) site. Residues Y252 to N375 form the SET domain. S-adenosyl-L-methionine-binding positions include R263 to W265, Y306, and N332 to H333. Zn(2+) is bound by residues C335, C409, C411, and C416. The Post-SET domain occupies V405–F421.

It belongs to the class V-like SAM-binding methyltransferase superfamily. Histone-lysine methyltransferase family. Suvar3-9 subfamily.

Its subcellular location is the nucleus. It localises to the chromosome. The protein localises to the centromere. The catalysed reaction is L-lysyl(9)-[histone H3] + 3 S-adenosyl-L-methionine = N(6),N(6),N(6)-trimethyl-L-lysyl(9)-[histone H3] + 3 S-adenosyl-L-homocysteine + 3 H(+). In terms of biological role, histone methyltransferase that specifically trimethylates 'Lys-9' of histone H3 using monomethylated H3 'Lys-9' as substrate. H3 'Lys-9' trimethylation represents a specific tag for epigenetic transcriptional repression by recruiting HP1 (CBX1, CBX3 and/or CBX5) proteins to methylated histones. Mainly functions in heterochromatin regions, thereby playing a central role in the establishment of constitutive heterochromatin at pericentric and telomere regions. H3 'Lys-9' trimethylation is also required to direct DNA methylation at pericentric repeats. SUV39H1 is targeted to histone H3 via its interaction with RB1 and is involved in many processes. This Xenopus laevis (African clawed frog) protein is Histone-lysine N-methyltransferase SUV39H1 (suv39h1).